A 148-amino-acid chain; its full sequence is Large ribosomal subunit protein bL9 (148 aa).

It belongs to the bacterial ribosomal protein bL9 family.

Binds to the 23S rRNA. The polypeptide is Large ribosomal subunit protein bL9 (Acetivibrio thermocellus (strain ATCC 27405 / DSM 1237 / JCM 9322 / NBRC 103400 / NCIMB 10682 / NRRL B-4536 / VPI 7372) (Clostridium thermocellum)).